The chain runs to 417 residues: Gamma-glutamyl phosphate reductase (417 aa).

Belongs to the gamma-glutamyl phosphate reductase family.

It is found in the cytoplasm. The enzyme catalyses L-glutamate 5-semialdehyde + phosphate + NADP(+) = L-glutamyl 5-phosphate + NADPH + H(+). Its pathway is amino-acid biosynthesis; L-proline biosynthesis; L-glutamate 5-semialdehyde from L-glutamate: step 2/2. Its function is as follows. Catalyzes the NADPH-dependent reduction of L-glutamate 5-phosphate into L-glutamate 5-semialdehyde and phosphate. The product spontaneously undergoes cyclization to form 1-pyrroline-5-carboxylate. The protein is Gamma-glutamyl phosphate reductase of Legionella pneumophila (strain Paris).